The primary structure comprises 561 residues: Putative transport protein YbjL (561 aa).

5 helical membrane-spanning segments follow: residues 8–28 (LLNGNYILLLFVVLALGLCLG), 32–52 (LGSIQLGNSIGVLVVSLLLGQ), 66–86 (FMLFIFCVGVEAGPNFFSIFF), 94–114 (MLALVMVGSALVIALGLGKLF), and 158–178 (NLSLGYALTYLIGLVSLIVGA). RCK C-terminal domains are found at residues 200 to 288 (RGLD…SFRN) and 292 to 373 (VFDR…RIGF). 6 consecutive transmembrane segments (helical) span residues 383–403 (LLAFCAFFVIGLMIGMITFQF), 406–426 (FSFGMGNAAGLLFAGIMLGFM), 451–471 (VFMAGVGLSAGSGINNGLGAI), 475–495 (MLIAGLIVSLVPVVICFLFGA), 503–523 (ALLFGAMMGARTCAPAMEIIS), and 540–560 (AIANVLLTLAGTIIVMVCPGL).

It belongs to the AAE transporter (TC 2.A.81) family. YbjL subfamily.

It is found in the cell membrane. In Shigella dysenteriae serotype 1 (strain Sd197), this protein is Putative transport protein YbjL.